Reading from the N-terminus, the 356-residue chain is Proline-rich protein 19 (356 aa).

Over residues 1 to 12 (MDTQGPVSQPFQ) the composition is skewed to polar residues. Disordered stretches follow at residues 1–53 (MDTQ…RDPP), 95–143 (LVPG…ELSG), 216–255 (INSPDQVPEQERQRKQQGTKEFTFPMPYTSSMPTAHRGSL), and 312–331 (PSSPLLPRTSVLDWSPSPPS). Basic residues predominate over residues 19 to 29 (RVRRRKTRRER).

In terms of assembly, interacts with CNTD1.

The protein resides in the nucleus. It is found in the chromosome. Its function is as follows. Promotes meiotic crossing over formation through its interaction with CNTD1 by participating in the crossover differentiation step of crossover-specific recombination intermediates. The chain is Proline-rich protein 19 from Homo sapiens (Human).